Consider the following 62-residue polypeptide: Probable tautomerase RSc0807 (62 aa).

The active-site Proton acceptor; via imino nitrogen is Pro2.

The protein belongs to the 4-oxalocrotonate tautomerase family.

The sequence is that of Probable tautomerase RSc0807 from Ralstonia nicotianae (strain ATCC BAA-1114 / GMI1000) (Ralstonia solanacearum).